The primary structure comprises 498 residues: L-amino acid oxidase Bs29 (498 aa).

The N-terminal stretch at 1-3 (SCA) is a signal peptide. Cysteine 12 and cysteine 175 form a disulfide bridge. FAD contacts are provided by residues 45–46 (MS), 65–66 (EA), arginine 73, and 89–92 (GPMR). A substrate-binding site is contributed by arginine 92. Asparagine 174 is a glycosylation site (N-linked (GlcNAc...) asparagine). Residue histidine 225 coordinates substrate. An FAD-binding site is contributed by valine 263. Cysteines 333 and 414 form a disulfide. Tyrosine 374 is a binding site for substrate. Residues glutamate 459 and 466-471 (GWIDST) each bind FAD. 466 to 467 (GW) contributes to the substrate binding site.

The protein belongs to the flavin monoamine oxidase family. FIG1 subfamily. Monomer. This is in contrast with most of its orthologs, that are non-covalently linked homodimers. The cofactor is FAD. Expressed by the venom gland.

The protein localises to the secreted. It catalyses the reaction an L-alpha-amino acid + O2 + H2O = a 2-oxocarboxylate + H2O2 + NH4(+). The catalysed reaction is L-leucine + O2 + H2O = 4-methyl-2-oxopentanoate + H2O2 + NH4(+). Functionally, catalyzes an oxidative deamination of predominantly hydrophobic and aromatic L-amino acids, thus producing hydrogen peroxide that may contribute to the diverse toxic effects of this enzyme. Shows activity on L-Leu. Damage cell membranes of the Gram-positive bacteria S.aureus (MIC=4 ug/ml and MBC=8 ug/ml) and the Gram-negative bacteria A.baumanni (MIC=2 ug/ml and MBC=4 ug/ml). This antibacterial activity is dependent on the production of hydrogen peroxyde, since it is inhibited by catalase, a hydrogen peroxyde scavenger. This chain is L-amino acid oxidase Bs29, found in Bothriechis schlegelii (Eyelash palm pitviper).